The primary structure comprises 236 residues: Urease accessory protein UreF (236 aa).

The protein belongs to the UreF family. As to quaternary structure, ureD, UreF and UreG form a complex that acts as a GTP-hydrolysis-dependent molecular chaperone, activating the urease apoprotein by helping to assemble the nickel containing metallocenter of UreC. The UreE protein probably delivers the nickel.

Its subcellular location is the cytoplasm. Required for maturation of urease via the functional incorporation of the urease nickel metallocenter. The sequence is that of Urease accessory protein UreF from Granulibacter bethesdensis (strain ATCC BAA-1260 / CGDNIH1).